Here is a 340-residue protein sequence, read N- to C-terminus: DNA-directed RNA polymerase subunit alpha (340 aa).

An alpha N-terminal domain (alpha-NTD) region spans residues Met-1 to Glu-236. The tract at residues Phe-251 to Asn-340 is alpha C-terminal domain (alpha-CTD).

Belongs to the RNA polymerase alpha chain family. As to quaternary structure, homodimer. The RNAP catalytic core consists of 2 alpha, 1 beta, 1 beta' and 1 omega subunit. When a sigma factor is associated with the core the holoenzyme is formed, which can initiate transcription.

The enzyme catalyses RNA(n) + a ribonucleoside 5'-triphosphate = RNA(n+1) + diphosphate. Its function is as follows. DNA-dependent RNA polymerase catalyzes the transcription of DNA into RNA using the four ribonucleoside triphosphates as substrates. This Rickettsia peacockii (strain Rustic) protein is DNA-directed RNA polymerase subunit alpha.